Reading from the N-terminus, the 1187-residue chain is ATP-dependent DNA helicase MER3 (1187 aa).

The segment at 1–41 (MKTKFDRLGTGKRSRPSPNNIDFNDQSATFKRNKKNSRQPS) is disordered. A compositionally biased stretch (polar residues) spans 16–30 (PSPNNIDFNDQSATF). The Helicase ATP-binding domain maps to 148 to 322 (PSIYESNENC…WLKTNNELPA (175 aa)). 161-168 (SPTGSGKT) contributes to the ATP binding site. Positions 268 to 271 (DEIH) match the DEIH box motif. One can recognise a Helicase C-terminal domain in the interval 360–542 (KLIEIIEKHA…NLIEHLAAET (183 aa)). The SEC63 domain occupies 616–922 (STAYGNAMTR…PKLEKIEFSI (307 aa)). A C4-type zinc finger spans residues 1039–1054 (CFHSCKDKTQCRHLCC). A disordered region spans residues 1146–1187 (NCPEIIPIDLESSDSYSSNTAASSISDPNGDLDFLGSDIEFE). Low complexity predominate over residues 1158 to 1171 (SDSYSSNTAASSIS).

It belongs to the helicase family. SKI2 subfamily. In terms of assembly, oligomerizes. The cofactor is a divalent metal cation. It depends on Zn(2+) as a cofactor.

It localises to the nucleus. The catalysed reaction is Couples ATP hydrolysis with the unwinding of duplex DNA by translocating in the 3'-5' direction.. The enzyme catalyses ATP + H2O = ADP + phosphate + H(+). Its function is as follows. DNA-dependent ATPase and 3'-5' DNA helicase. Required in the control of double strand break transition and crossover during meiosis. ATPase is slightly better stimulated by single-stranded (ss) than double-stranded (ds)DNA. Unwinds Holliday junction (HJ) DNA to Y-DNA and to ssDNA. Efficient unwinding requires 6 nucleotides of 3'-ssDNA; seems to initiate unwinding from blunt ends when they open slightly. Binds HJ, dsDNA, ssDNA and 3'- and 5-overhang DNA. In Saccharomyces cerevisiae (strain ATCC 204508 / S288c) (Baker's yeast), this protein is ATP-dependent DNA helicase MER3.